The sequence spans 314 residues: Cytochrome f (314 aa).

The N-terminal stretch at 1-29 (MTRSISISVLIISVLIMIYVITRTSISNA) is a signal peptide. Positions 30, 50, 53, and 54 each coordinate heme. A helical transmembrane segment spans residues 280 to 300 (VQGLLFFLASVILAQIFLVLK).

Belongs to the cytochrome f family. In terms of assembly, the 4 large subunits of the cytochrome b6-f complex are cytochrome b6, subunit IV (17 kDa polypeptide, petD), cytochrome f and the Rieske protein, while the 4 small subunits are PetG, PetL, PetM and PetN. The complex functions as a dimer. Requires heme as cofactor.

The protein localises to the plastid. Its subcellular location is the chloroplast thylakoid membrane. In terms of biological role, component of the cytochrome b6-f complex, which mediates electron transfer between photosystem II (PSII) and photosystem I (PSI), cyclic electron flow around PSI, and state transitions. This Illicium oligandrum (Star anise) protein is Cytochrome f.